We begin with the raw amino-acid sequence, 459 residues long: Bifunctional protein GlmU (459 aa).

The segment at 1–230 (MSNRFAVILA…FDETLGVNDR (230 aa)) is pyrophosphorylase. UDP-N-acetyl-alpha-D-glucosamine is bound by residues 9 to 12 (LAAG), Lys-23, Gln-73, and 78 to 79 (GT). Asp-103 lines the Mg(2+) pocket. Residues Gly-140, Glu-155, Asn-170, and Asn-228 each contribute to the UDP-N-acetyl-alpha-D-glucosamine site. Asn-228 contacts Mg(2+). The tract at residues 231–251 (VALSQAEIIMKNRINRKNMVN) is linker. The tract at residues 252-459 (GVTIIDPSNT…VDQLLNKKKS (208 aa)) is N-acetyltransferase. Residues Arg-333 and Lys-351 each contribute to the UDP-N-acetyl-alpha-D-glucosamine site. The active-site Proton acceptor is His-363. UDP-N-acetyl-alpha-D-glucosamine-binding residues include Tyr-366 and Asn-377. Residues 386-387 (NY), Ala-423, and Arg-440 contribute to the acetyl-CoA site.

The protein in the N-terminal section; belongs to the N-acetylglucosamine-1-phosphate uridyltransferase family. This sequence in the C-terminal section; belongs to the transferase hexapeptide repeat family. As to quaternary structure, homotrimer. The cofactor is Mg(2+).

It localises to the cytoplasm. It carries out the reaction alpha-D-glucosamine 1-phosphate + acetyl-CoA = N-acetyl-alpha-D-glucosamine 1-phosphate + CoA + H(+). The enzyme catalyses N-acetyl-alpha-D-glucosamine 1-phosphate + UTP + H(+) = UDP-N-acetyl-alpha-D-glucosamine + diphosphate. The protein operates within nucleotide-sugar biosynthesis; UDP-N-acetyl-alpha-D-glucosamine biosynthesis; N-acetyl-alpha-D-glucosamine 1-phosphate from alpha-D-glucosamine 6-phosphate (route II): step 2/2. It functions in the pathway nucleotide-sugar biosynthesis; UDP-N-acetyl-alpha-D-glucosamine biosynthesis; UDP-N-acetyl-alpha-D-glucosamine from N-acetyl-alpha-D-glucosamine 1-phosphate: step 1/1. It participates in bacterial outer membrane biogenesis; LPS lipid A biosynthesis. Its function is as follows. Catalyzes the last two sequential reactions in the de novo biosynthetic pathway for UDP-N-acetylglucosamine (UDP-GlcNAc). The C-terminal domain catalyzes the transfer of acetyl group from acetyl coenzyme A to glucosamine-1-phosphate (GlcN-1-P) to produce N-acetylglucosamine-1-phosphate (GlcNAc-1-P), which is converted into UDP-GlcNAc by the transfer of uridine 5-monophosphate (from uridine 5-triphosphate), a reaction catalyzed by the N-terminal domain. This Bacillus cereus (strain ATCC 14579 / DSM 31 / CCUG 7414 / JCM 2152 / NBRC 15305 / NCIMB 9373 / NCTC 2599 / NRRL B-3711) protein is Bifunctional protein GlmU.